Here is a 321-residue protein sequence, read N- to C-terminus: Aspartate carbamoyltransferase catalytic subunit (321 aa).

Arg-64 and Thr-65 together coordinate carbamoyl phosphate. Lys-92 serves as a coordination point for L-aspartate. Arg-114, His-144, and Gln-147 together coordinate carbamoyl phosphate. L-aspartate contacts are provided by Arg-177 and Arg-232. The carbamoyl phosphate site is built by Gly-273 and Pro-274.

It belongs to the aspartate/ornithine carbamoyltransferase superfamily. ATCase family. Heterododecamer (2C3:3R2) of six catalytic PyrB chains organized as two trimers (C3), and six regulatory PyrI chains organized as three dimers (R2).

It carries out the reaction carbamoyl phosphate + L-aspartate = N-carbamoyl-L-aspartate + phosphate + H(+). The protein operates within pyrimidine metabolism; UMP biosynthesis via de novo pathway; (S)-dihydroorotate from bicarbonate: step 2/3. Catalyzes the condensation of carbamoyl phosphate and aspartate to form carbamoyl aspartate and inorganic phosphate, the committed step in the de novo pyrimidine nucleotide biosynthesis pathway. This is Aspartate carbamoyltransferase catalytic subunit from Alkalilimnicola ehrlichii (strain ATCC BAA-1101 / DSM 17681 / MLHE-1).